Here is a 133-residue protein sequence, read N- to C-terminus: Small ribosomal subunit protein uS8 (133 aa).

It belongs to the universal ribosomal protein uS8 family. In terms of assembly, part of the 30S ribosomal subunit. Contacts proteins S5 and S12.

One of the primary rRNA binding proteins, it binds directly to 16S rRNA central domain where it helps coordinate assembly of the platform of the 30S subunit. This chain is Small ribosomal subunit protein uS8, found in Chlamydia pneumoniae (Chlamydophila pneumoniae).